The primary structure comprises 415 residues: Histidine--tRNA ligase (415 aa).

It belongs to the class-II aminoacyl-tRNA synthetase family. As to quaternary structure, homodimer.

Its subcellular location is the cytoplasm. It catalyses the reaction tRNA(His) + L-histidine + ATP = L-histidyl-tRNA(His) + AMP + diphosphate + H(+). The sequence is that of Histidine--tRNA ligase from Gluconacetobacter diazotrophicus (strain ATCC 49037 / DSM 5601 / CCUG 37298 / CIP 103539 / LMG 7603 / PAl5).